The following is a 568-amino-acid chain: Transport inhibitor response 1-like protein Os11g0515500 (568 aa).

Residues 1–45 (MVFFPEEVVEHILGFLASHRDRNAVSLVCREWYRVERLSRRSVLV) enclose the F-box domain. Residues lysine 69, 103–104 (KR), and arginine 335 each bind 1D-myo-inositol hexakisphosphate. The tract at residues 338-343 (PANANA) is interaction with auxin-responsive proteins. A 1D-myo-inositol hexakisphosphate-binding site is contributed by 390 to 392 (SFR). Residues 394–398 (CVLDP) are interaction with auxin-responsive proteins. Arginine 425 is a binding site for 1D-myo-inositol hexakisphosphate. The interval 453-454 (AF) is interaction with auxin-responsive proteins. Residues 473–474 (KK) and arginine 498 each bind 1D-myo-inositol hexakisphosphate.

As to quaternary structure, part of a SCF (SKP1-cullin-F-box) protein ligase complex. May interact with auxin and auxin-responsive proteins.

Its subcellular location is the nucleus. Its pathway is protein modification; protein ubiquitination. This chain is Transport inhibitor response 1-like protein Os11g0515500, found in Oryza sativa subsp. japonica (Rice).